Reading from the N-terminus, the 1151-residue chain is Syntaxin-binding protein 5 (1151 aa).

Positions 14–34 (TAGSSSASQQQQQQHPPGNRE) are disordered. Over residues 17-27 (SSSASQQQQQQ) the composition is skewed to low complexity. WD repeat units follow at residues 61–94 (SALAFDPVQKILAVGTQTGALRLFGRPGVECYCQ), 101–140 (VIQLQFLINEGALVSALADDTLHLWNLRQKRPAILHSLKF), 145–181 (VTFCHLPFQSKWLYVGTERGNIHIVNVESFTLSGYVI), 200–234 (HISDNPMDEGKLLIGFESGTVVLWDLKSKKADYRY), 240–272 (IHSVAWHHEGKQFICSHSDGTLTIWNVRSPAKP), 294–336 (PILK…KSTA), 344–378 (IVDFLTLCETPYPNDFQEPYAVVVLLEKDLVLIDL), 400–477 (TCCE…YKLK), 505–619 (QIIS…ELVI), and 633–695 (TSLA…SGAG). Disordered stretches follow at residues 555-595 (ETPE…GLRD) and 674-729 (SNDP…EQKM). Ser-692 bears the Phosphoserine mark. A compositionally biased stretch (low complexity) spans 712 to 721 (SPTSGSSSPH). Phosphoserine; by PKA is present on Ser-723. Ser-759 bears the Phosphoserine mark. Thr-762 carries the phosphothreonine modification. Ser-782 is modified (phosphoserine). The residue at position 784 (Thr-784) is a Phosphothreonine. Ser-785 carries the post-translational modification Phosphoserine. WD repeat units lie at residues 794–851 (ISAL…SGTI), 860–934 (RMAF…QNCA), 939–983 (ITET…LDVY), and 997–1020 (CFTNNGQALYLVSPTEIQRLTYSQ). A compositionally biased stretch (basic and acidic residues) spans 881–892 (HNVPEEKDEKEK). The disordered stretch occupies residues 881–906 (HNVPEEKDEKEKLKKRRPVSVSPSSS). Ser-900 and Ser-902 each carry phosphoserine. Thr-1039 bears the Phosphothreonine mark. Residues Ser-1058 and Ser-1131 each carry the phosphoserine modification. Residues 1086–1146 (GIEGVKGAAS…HEIMLKYKDK (61 aa)) enclose the v-SNARE coiled-coil homology domain.

This sequence belongs to the WD repeat L(2)GL family. As to quaternary structure, interacts with STX1A and STX1B via its v-SNARE homology domain. Part of a complex that contains STX1, STXBP5, SNAP25 and SYT1. Part of a complex that contains STXBP5, STX4A and SNAP23.

The protein localises to the cytoplasm. Its subcellular location is the cell membrane. It is found in the cytoplasmic vesicle membrane. The protein resides in the cytoplasmic vesicle. It localises to the secretory vesicle. The protein localises to the synaptic vesicle. Its subcellular location is the synapse. Functionally, plays a regulatory role in calcium-dependent exocytosis and neurotransmitter release. Inhibits membrane fusion between transport vesicles and the plasma membrane. May modulate the assembly of trans-SNARE complexes between transport vesicles and the plasma membrane. Inhibits translocation of GLUT4 from intracellular vesicles to the plasma membrane. Competes with STXBP1 for STX1 binding. This chain is Syntaxin-binding protein 5 (STXBP5), found in Homo sapiens (Human).